Reading from the N-terminus, the 236-residue chain is MATITTWFTLGLLGELLGTAVLAYGYTLVPEETRKRYLLLIAIPGIAIVAYALMALGFGSIQSEGHAVYVVRYVDWLLTTPLNVWFLALLAGASREDTVKLVVLQALTIVFGFAGAVTPSPVSYALFAVGGALFGGVIYLLYRNIAVAAKSTLSDIEVSLYRTLRNFVVVLWLVYPVVWLLGAAGVGLMDVETATLVVVYLDVVTKVGFGVIALLAMIDLGSAGETAEEPTAVAGD.

7 helical membrane-spanning segments follow: residues I4 to Y24, L38 to F58, Y73 to A93, L101 to P121, V122 to Y142, F167 to G187, and L196 to A216. At K206 the chain carries N6-(retinylidene)lysine.

It belongs to the archaeal/bacterial/fungal opsin family. The covalent binding of retinal to the apoprotein, bacterioopsin, generates bacteriorhodopsin.

Its subcellular location is the membrane. Functionally, mediates the photorepellent response. The chain is Sensory rhodopsin II (sop2) from Haloarcula marismortui (strain ATCC 43049 / DSM 3752 / JCM 8966 / VKM B-1809) (Halobacterium marismortui).